The sequence spans 201 residues: Dephospho-CoA kinase (201 aa).

The region spanning 4–201 (SVGLTGNIAS…KYLREAKIKQ (198 aa)) is the DPCK domain. 12–17 (ASGKST) serves as a coordination point for ATP.

This sequence belongs to the CoaE family.

It localises to the cytoplasm. It carries out the reaction 3'-dephospho-CoA + ATP = ADP + CoA + H(+). Its pathway is cofactor biosynthesis; coenzyme A biosynthesis; CoA from (R)-pantothenate: step 5/5. In terms of biological role, catalyzes the phosphorylation of the 3'-hydroxyl group of dephosphocoenzyme A to form coenzyme A. The polypeptide is Dephospho-CoA kinase (Legionella pneumophila subsp. pneumophila (strain Philadelphia 1 / ATCC 33152 / DSM 7513)).